The following is a 400-amino-acid chain: Formate-dependent phosphoribosylglycinamide formyltransferase (400 aa).

Residues 22-23 (EL) and Glu-82 contribute to the N(1)-(5-phospho-beta-D-ribosyl)glycinamide site. Residues Arg-115, Lys-156, 161–166 (SSGKGQ), 196–199 (EGFI), and Glu-204 contribute to the ATP site. One can recognise an ATP-grasp domain in the interval 120-309 (RLAAETLCLP…EFALHARAIL (190 aa)). Positions 268 and 280 each coordinate Mg(2+). Residues Asp-287, Lys-361, and 368–369 (RR) each bind N(1)-(5-phospho-beta-D-ribosyl)glycinamide.

This sequence belongs to the PurK/PurT family. In terms of assembly, homodimer.

The enzyme catalyses N(1)-(5-phospho-beta-D-ribosyl)glycinamide + formate + ATP = N(2)-formyl-N(1)-(5-phospho-beta-D-ribosyl)glycinamide + ADP + phosphate + H(+). Its pathway is purine metabolism; IMP biosynthesis via de novo pathway; N(2)-formyl-N(1)-(5-phospho-D-ribosyl)glycinamide from N(1)-(5-phospho-D-ribosyl)glycinamide (formate route): step 1/1. Functionally, involved in the de novo purine biosynthesis. Catalyzes the transfer of formate to 5-phospho-ribosyl-glycinamide (GAR), producing 5-phospho-ribosyl-N-formylglycinamide (FGAR). Formate is provided by PurU via hydrolysis of 10-formyl-tetrahydrofolate. The polypeptide is Formate-dependent phosphoribosylglycinamide formyltransferase (Xanthomonas euvesicatoria pv. vesicatoria (strain 85-10) (Xanthomonas campestris pv. vesicatoria)).